A 209-amino-acid chain; its full sequence is Uridine kinase (209 aa).

12–19 (GGSGSGKT) is an ATP binding site.

It belongs to the uridine kinase family.

The protein localises to the cytoplasm. It carries out the reaction uridine + ATP = UMP + ADP + H(+). It catalyses the reaction cytidine + ATP = CMP + ADP + H(+). It functions in the pathway pyrimidine metabolism; CTP biosynthesis via salvage pathway; CTP from cytidine: step 1/3. It participates in pyrimidine metabolism; UMP biosynthesis via salvage pathway; UMP from uridine: step 1/1. This chain is Uridine kinase, found in Listeria welshimeri serovar 6b (strain ATCC 35897 / DSM 20650 / CCUG 15529 / CIP 8149 / NCTC 11857 / SLCC 5334 / V8).